The following is a 488-amino-acid chain: Coiled-coil domain-containing protein 77 (488 aa).

The interval 21–48 (GVAVSGPTKRRGMADSLESTPLPSPEDR) is disordered. Ser36 bears the Phosphoserine mark. Lys51 is covalently cross-linked (Glycyl lysine isopeptide (Lys-Gly) (interchain with G-Cter in SUMO2)). Coiled-coil stretches lie at residues 55–118 (SKEL…QVCL) and 208–488 (KESS…LRLC). The disordered stretch occupies residues 192 to 213 (FKADPKISKRRPSRERKESSEH).

The polypeptide is Coiled-coil domain-containing protein 77 (CCDC77) (Homo sapiens (Human)).